Here is a 102-residue protein sequence, read N- to C-terminus: Thioredoxin (102 aa).

Residues 1–102 (MVKIISSENF…FLTNLINKHA (102 aa)) enclose the Thioredoxin domain. Cysteine 28 and cysteine 31 are disulfide-bonded.

It belongs to the thioredoxin family.

Its function is as follows. Participates in various redox reactions through the reversible oxidation of its active center dithiol to a disulfide and catalyzes dithiol-disulfide exchange reactions. The polypeptide is Thioredoxin (trxA) (Chlamydia pneumoniae (Chlamydophila pneumoniae)).